The following is a 369-amino-acid chain: Deoxyuridine 5'-triphosphate nucleotidohydrolase (369 aa).

Substrate contacts are provided by residues 258-260 and 364-365; these read RSS and FG.

Belongs to the dUTPase family. Requires Mg(2+) as cofactor.

It carries out the reaction dUTP + H2O = dUMP + diphosphate + H(+). Involved in nucleotide metabolism: produces dUMP, the immediate precursor of thymidine nucleotides and decreases the intracellular concentration of dUTP to avoid uracil incorporation into viral DNA. The protein is Deoxyuridine 5'-triphosphate nucleotidohydrolase of Homo sapiens (Human).